The primary structure comprises 523 residues: Membrane protein PTM1 (523 aa).

The first 26 residues, 1 to 26 (MRVYQFCRPFQLFTYFLCYLLVFVKA), serve as a signal peptide directing secretion. At 27–197 (NKEKISQKNY…LAGTEINKLP (171 aa)) the chain is on the lumenal side. The N-linked (GlcNAc...) asparagine glycan is linked to asparagine 132. The helical transmembrane segment at 198 to 218 (LYGLLAVAYVVAMALYSFAFW) threads the bilayer. Topologically, residues 219–230 (KHKHELLPLQKY) are cytoplasmic. A helical membrane pass occupies residues 231-251 (LLAFFVFLTAETIFVWAYYDL). Topologically, residues 252–265 (KNEKGDTAGIKVYM) are lumenal. A helical transmembrane segment spans residues 266 to 286 (VFLSILTAGKVTFSFFLLLII). Residues 287 to 304 (ALGYGIVYPKLNKTLMRR) lie on the Cytoplasmic side of the membrane. A helical transmembrane segment spans residues 305-325 (CQMYGALTYAICIGFLIQSYL). The Lumenal segment spans residues 326–333 (TDMEAPSP). A helical transmembrane segment spans residues 334 to 354 (LILITLIPMALALIIFYYMII). The Cytoplasmic segment spans residues 355–381 (RSMTKTVIYLKEQRQIVKLNMYKKLLY). A helical membrane pass occupies residues 382–402 (IIYASFLSVLAGSIVSSFIYV). Residues 403 to 417 (GMNTIDMIEKNWRSR) are Lumenal-facing. A helical transmembrane segment spans residues 418–438 (FFVTDFWPTLVYFIVFVTIAF). Topologically, residues 439–523 (LWRPTDTSYM…HGPVSPSPTK (85 aa)) are cytoplasmic. Residue serine 480 is modified to Phosphoserine. Phosphothreonine occurs at positions 483 and 498. A disordered region spans residues 483 to 523 (TGERGIDEDDLNLNFTDDEEGHDNVNNHSQGHGPVSPSPTK). The segment covering 488-503 (IDEDDLNLNFTDDEEG) has biased composition (acidic residues).

It belongs to the LU7TM family.

It is found in the golgi apparatus membrane. The protein resides in the early endosome membrane. The chain is Membrane protein PTM1 (PTM1) from Saccharomyces cerevisiae (strain YJM789) (Baker's yeast).